The following is a 393-amino-acid chain: Digeranylgeranylglycerophospholipid reductase (393 aa).

10 residues coordinate FAD: A14, D33, C44, A45, G47, R100, A124, D280, G292, and I293.

This sequence belongs to the geranylgeranyl reductase family. DGGGPL reductase subfamily. Requires FAD as cofactor.

The enzyme catalyses a 2,3-bis-O-phytanyl-sn-glycerol 1-phospholipid + 8 A = a 2,3-bis-O-(geranylgeranyl)-sn-glycerol 1-phospholipid + 8 AH2. The catalysed reaction is 2,3-bis-O-(phytanyl)-sn-glycerol 1-phosphate + 8 A = 2,3-bis-O-(geranylgeranyl)-sn-glycerol 1-phosphate + 8 AH2. It catalyses the reaction CDP-2,3-bis-O-(geranylgeranyl)-sn-glycerol + 8 AH2 = CDP-2,3-bis-O-(phytanyl)-sn-glycerol + 8 A. It carries out the reaction archaetidylserine + 8 AH2 = 2,3-bis-O-phytanyl-sn-glycero-3-phospho-L-serine + 8 A. Its pathway is membrane lipid metabolism; glycerophospholipid metabolism. Functionally, is involved in the reduction of 2,3-digeranylgeranylglycerophospholipids (unsaturated archaeols) into 2,3-diphytanylglycerophospholipids (saturated archaeols) in the biosynthesis of archaeal membrane lipids. Catalyzes the formation of archaetidic acid (2,3-di-O-phytanyl-sn-glyceryl phosphate) from 2,3-di-O-geranylgeranylglyceryl phosphate (DGGGP) via the hydrogenation of each double bond of the isoprenoid chains. Is also probably able to reduce double bonds of geranyl groups in CDP-2,3-bis-O-(geranylgeranyl)-sn-glycerol and archaetidylserine, thus acting at various stages in the biosynthesis of archaeal membrane lipids. This is Digeranylgeranylglycerophospholipid reductase from Methanobrevibacter smithii (strain ATCC 35061 / DSM 861 / OCM 144 / PS).